Reading from the N-terminus, the 374-residue chain is Methylthioribose-1-phosphate isomerase (374 aa).

Aspartate 251 (proton donor) is an active-site residue.

It belongs to the eIF-2B alpha/beta/delta subunits family. MtnA subfamily.

The protein resides in the cytoplasm. Its subcellular location is the nucleus. The enzyme catalyses 5-(methylsulfanyl)-alpha-D-ribose 1-phosphate = 5-(methylsulfanyl)-D-ribulose 1-phosphate. It functions in the pathway amino-acid biosynthesis; L-methionine biosynthesis via salvage pathway; L-methionine from S-methyl-5-thio-alpha-D-ribose 1-phosphate: step 1/6. In terms of biological role, catalyzes the interconversion of methylthioribose-1-phosphate (MTR-1-P) into methylthioribulose-1-phosphate (MTRu-1-P). This is Methylthioribose-1-phosphate isomerase (IDI2) from Oryza sativa subsp. japonica (Rice).